Consider the following 480-residue polypeptide: Aspartyl/glutamyl-tRNA(Asn/Gln) amidotransferase subunit B (480 aa).

It belongs to the GatB/GatE family. GatB subfamily. As to quaternary structure, heterotrimer of A, B and C subunits.

The enzyme catalyses L-glutamyl-tRNA(Gln) + L-glutamine + ATP + H2O = L-glutaminyl-tRNA(Gln) + L-glutamate + ADP + phosphate + H(+). It carries out the reaction L-aspartyl-tRNA(Asn) + L-glutamine + ATP + H2O = L-asparaginyl-tRNA(Asn) + L-glutamate + ADP + phosphate + 2 H(+). Allows the formation of correctly charged Asn-tRNA(Asn) or Gln-tRNA(Gln) through the transamidation of misacylated Asp-tRNA(Asn) or Glu-tRNA(Gln) in organisms which lack either or both of asparaginyl-tRNA or glutaminyl-tRNA synthetases. The reaction takes place in the presence of glutamine and ATP through an activated phospho-Asp-tRNA(Asn) or phospho-Glu-tRNA(Gln). The polypeptide is Aspartyl/glutamyl-tRNA(Asn/Gln) amidotransferase subunit B (Caldicellulosiruptor bescii (strain ATCC BAA-1888 / DSM 6725 / KCTC 15123 / Z-1320) (Anaerocellum thermophilum)).